Reading from the N-terminus, the 437-residue chain is Eukaryotic peptide chain release factor subunit 1 (437 aa).

Gln-182 bears the N5-methylglutamine mark. Lys-331 is covalently cross-linked (Glycyl lysine isopeptide (Lys-Gly) (interchain with G-Cter in ubiquitin)). Residue Ser-421 is modified to Phosphoserine.

The protein belongs to the eukaryotic release factor 1 family. Component of the eRF1-eRF3-GTP ternary complex, composed of SUP45/eRF1, SUP35/eRF3 and GTP. Interacts with TPA1. Post-translationally, N5-methylated on Gln-182 by MTQ2.

It localises to the cytoplasm. Functionally, component of the eRF1-eRF3-GTP ternary complex, a ternary complex that mediates translation termination in response to the termination codons. The eRF1-eRF3-GTP complex binds to a stop codon in the ribosomal A-site. SUP45/eRF1 is responsible for stop codon recognition and inducing hydrolysis of peptidyl-tRNA. Following GTP hydrolysis by SUP35/eRF3, SUP35/eRF3 dissociates, permitting SUP45/eRF1 to accommodate fully in the A-site and mediate hydrolysis of peptidyl-tRNA. This chain is Eukaryotic peptide chain release factor subunit 1 (SUP45), found in Saccharomyces cerevisiae (strain ATCC 204508 / S288c) (Baker's yeast).